The primary structure comprises 238 residues: N-(5'-phosphoribosyl)anthranilate isomerase (238 aa).

Belongs to the TrpF family.

It carries out the reaction N-(5-phospho-beta-D-ribosyl)anthranilate = 1-(2-carboxyphenylamino)-1-deoxy-D-ribulose 5-phosphate. It functions in the pathway amino-acid biosynthesis; L-tryptophan biosynthesis; L-tryptophan from chorismate: step 3/5. This chain is N-(5'-phosphoribosyl)anthranilate isomerase, found in Methanosarcina acetivorans (strain ATCC 35395 / DSM 2834 / JCM 12185 / C2A).